The following is a 119-amino-acid chain: Small ribosomal subunit protein uS13 (119 aa).

Residues 96-119 (PVRGQRTKTNARTRKGPRKLIKSR) are disordered.

It belongs to the universal ribosomal protein uS13 family. In terms of assembly, part of the 30S ribosomal subunit. Forms a loose heterodimer with protein S19. Forms two bridges to the 50S subunit in the 70S ribosome.

Its function is as follows. Located at the top of the head of the 30S subunit, it contacts several helices of the 16S rRNA. In the 70S ribosome it contacts the 23S rRNA (bridge B1a) and protein L5 of the 50S subunit (bridge B1b), connecting the 2 subunits; these bridges are implicated in subunit movement. Contacts the tRNAs in the A and P-sites. This chain is Small ribosomal subunit protein uS13, found in Buchnera aphidicola subsp. Cinara cedri (strain Cc).